The primary structure comprises 244 residues: Ferric aerobactin reductase IutB (244 aa).

[2Fe-2S] cluster contacts are provided by Cys220, Cys221, Cys232, and Cys235.

Monomer. [2Fe-2S] cluster serves as cofactor.

The protein resides in the cytoplasm. It catalyses the reaction 2 a Fe(II)-siderophore + NAD(+) + H(+) = 2 a Fe(III)-siderophore + NADH. The catalysed reaction is 2 a Fe(II)-siderophore + NADP(+) + H(+) = 2 a Fe(III)-siderophore + NADPH. Ferric-siderophore reductase involved in iron removal from the siderophores after their transport into the cell. Acts as a major ferric-aerobactin reductase catalyzing the reduction of Fe(3+)-aerobactin, a citrate-hydroxamate siderophore produced by other bacteria. Catalyzes reduction of Fe(3+)-vulnibactin, a catecholate siderophore synthesized by V.vulnificus, in the absence of VuuB. Catalyzes reduction of ferrioxamine B and Fe(3+)-vibriobactin in vitro. No activity with Fe(3+)-enterobactin. Catalyzes reduction of ferric chelating compound Fe(3+)-nitrilotriacetic acid (NTA) in the presence of NADH, NADPH or reduced glutathione (GSH) as its electron donor in vitro. Also catalyzes reduction of ferric chelating compounds Fe(3+)-citrate and Fe(3+)-EDTA as well as non-complexed FeCl3 in the presence of GSH as its electron donor in vitro. Highest activity with Fe(3+)-NTA as electron acceptor and GSH as donor. This Vibrio vulnificus protein is Ferric aerobactin reductase IutB.